The chain runs to 400 residues: Riboflavin biosynthesis protein RibBA (400 aa).

The interval 1–202 is DHBP synthase; that stretch reads MTTFGTIEQA…IADLVMYRRR (202 aa). D-ribulose 5-phosphate is bound by residues 28–29, Asp33, 141–145, and Glu165; these read RE and RTGHT. A Mg(2+)-binding site is contributed by Glu29. His144 lines the Mg(2+) pocket. Residues 203-400 are GTP cyclohydrolase II; that stretch reads TEKQVELVAE…KRDRMGHLLG (198 aa). 253 to 257 lines the GTP pocket; sequence RAHSE. Cys258, Cys269, and Cys271 together coordinate Zn(2+). GTP contacts are provided by residues Gln274, 297–299, and Thr319; that span reads EGR. Residue Asp331 is the Proton acceptor; for GTP cyclohydrolase activity of the active site. The active-site Nucleophile; for GTP cyclohydrolase activity is Arg333. GTP-binding residues include Thr354 and Lys359.

In the N-terminal section; belongs to the DHBP synthase family. It in the C-terminal section; belongs to the GTP cyclohydrolase II family. Requires Mg(2+) as cofactor. Mn(2+) is required as a cofactor. The cofactor is Zn(2+).

The enzyme catalyses D-ribulose 5-phosphate = (2S)-2-hydroxy-3-oxobutyl phosphate + formate + H(+). It catalyses the reaction GTP + 4 H2O = 2,5-diamino-6-hydroxy-4-(5-phosphoribosylamino)-pyrimidine + formate + 2 phosphate + 3 H(+). It functions in the pathway cofactor biosynthesis; riboflavin biosynthesis; 2-hydroxy-3-oxobutyl phosphate from D-ribulose 5-phosphate: step 1/1. The protein operates within cofactor biosynthesis; riboflavin biosynthesis; 5-amino-6-(D-ribitylamino)uracil from GTP: step 1/4. In terms of biological role, catalyzes the conversion of D-ribulose 5-phosphate to formate and 3,4-dihydroxy-2-butanone 4-phosphate. Functionally, catalyzes the conversion of GTP to 2,5-diamino-6-ribosylamino-4(3H)-pyrimidinone 5'-phosphate (DARP), formate and pyrophosphate. In Salinispora tropica (strain ATCC BAA-916 / DSM 44818 / JCM 13857 / NBRC 105044 / CNB-440), this protein is Riboflavin biosynthesis protein RibBA.